The chain runs to 132 residues: UPF0292 protein PYRAB04740 (132 aa).

A Toprim domain is found at 20–100; it reads DGAIIVEGPR…KVDTETRRSL (81 aa). The Mg(2+) site is built by Glu26, Asp69, and Asp71.

This sequence belongs to the UPF0292 family. The cofactor is Mg(2+).

The sequence is that of UPF0292 protein PYRAB04740 from Pyrococcus abyssi (strain GE5 / Orsay).